The sequence spans 340 residues: S-adenosylmethionine:tRNA ribosyltransferase-isomerase (340 aa).

The protein belongs to the QueA family. Monomer.

The protein resides in the cytoplasm. The catalysed reaction is 7-aminomethyl-7-carbaguanosine(34) in tRNA + S-adenosyl-L-methionine = epoxyqueuosine(34) in tRNA + adenine + L-methionine + 2 H(+). The protein operates within tRNA modification; tRNA-queuosine biosynthesis. In terms of biological role, transfers and isomerizes the ribose moiety from AdoMet to the 7-aminomethyl group of 7-deazaguanine (preQ1-tRNA) to give epoxyqueuosine (oQ-tRNA). This chain is S-adenosylmethionine:tRNA ribosyltransferase-isomerase, found in Nitratiruptor sp. (strain SB155-2).